Here is a 283-residue protein sequence, read N- to C-terminus: Tetraspanin-33 (283 aa).

Topologically, residues 1 to 24 are cytoplasmic; it reads MARRPGVPAAYGDEFSFVSPLVKY. The helical transmembrane segment at 25–45 threads the bilayer; sequence LLFFFNMLFWVISMVMVAVGV. The Extracellular portion of the chain corresponds to 46 to 64; sequence YARLMKHAEAALACLAVDP. The helical transmembrane segment at 65–85 threads the bilayer; that stretch reads AILLIVVGVLMFLLTFCGCIG. At 86 to 96 the chain is on the cytoplasmic side; it reads SLRENICLLQT. The helical transmembrane segment at 97-117 threads the bilayer; that stretch reads FSLCLTIVFLLQLAAGILGFV. Residues 118–235 lie on the Extracellular side of the membrane; sequence FSDKARGKVS…DKLVNWIHSN (118 aa). Intrachain disulfides connect Cys156–Cys224, Cys157–Cys189, Cys173–Cys183, and Cys190–Cys203. The N-linked (GlcNAc...) asparagine glycan is linked to Asn172. The helical transmembrane segment at 236–256 threads the bilayer; the sequence is LFLLGGVALGLAIPQLVGILL. Over 257-283 the chain is Cytoplasmic; sequence SQVLVNQIKDQIKLQLYNQQHRADPWY.

It belongs to the tetraspanin (TM4SF) family. Homodimer; disulfide-linked. Interacts (via extracellular domain) with ADAM10 (via extracellular domain). Interacts (via cytoplasmic domain) with PLEKHA7 (via WW domains); the interaction is dependent on PDZD11 being bound to PLEKHA7 and facilitates the docking of ADAM10 to zonula adherens. As to expression, predominantly expressed in erythroblasts.

Its subcellular location is the cell membrane. The protein resides in the cell junction. It localises to the adherens junction. The protein localises to the cytoplasm. In terms of biological role, part of TspanC8 subgroup, composed of 6 members that interact with the transmembrane metalloprotease ADAM10. This interaction is required for ADAM10 exit from the endoplasmic reticulum and for enzymatic maturation and trafficking to the cell surface as well as substrate specificity. Different TspanC8/ADAM10 complexes have distinct substrates. Plays an important role in normal erythropoiesis. It has a role in the differentiation of erythroid progenitors. Negatively regulates ligand-induced Notch activity probably by regulating ADAM10 activity. Mediates docking of ADAM10 to zonula adherens by interacting with ADAM10 and, in a PDZD11-dependent manner, with the zonula adherens protein PLEKHA7. This chain is Tetraspanin-33 (Tspan33), found in Mus musculus (Mouse).